We begin with the raw amino-acid sequence, 181 residues long: Transcription termination/antitermination protein NusG (181 aa).

The 32-residue stretch at 130–161 (PGELVRVSDGPFADFNGVVEEVDYEKSRLKVS) folds into the KOW domain.

This sequence belongs to the NusG family. In terms of assembly, monomer. Interacts with the transcription termination factor Rho and with RNA polymerase.

Its function is as follows. Participates in transcription elongation, termination and antitermination. In the absence of Rho, increases the rate of transcription elongation by the RNA polymerase (RNAP), probably by partially suppressing pausing. In the presence of Rho, modulates most Rho-dependent termination events by interacting with the RNAP to render the complex more susceptible to the termination activity of Rho. May be required to overcome a kinetic limitation of Rho to function at certain terminators. Also involved in ribosomal RNA transcriptional antitermination. The polypeptide is Transcription termination/antitermination protein NusG (Yersinia pestis).